A 934-amino-acid polypeptide reads, in one-letter code: Protein unc-45 homolog B (934 aa).

TPR repeat units lie at residues 9–42 (SVQLKEEGNKHFQAGEIDQAIDCYTKAIKTCKKE), 48–81 (AVIYRNRSACFLKKENYSNAASDATKAIDVDAAD), and 83–115 (KALYRRCQAFEKLGKLDMAFKDVQRCATIEPKN). ARM repeat units lie at residues 174–213 (DAGAERIFQNNGVPLLMQLIDTGKPEMILAAIRTLSGMCT), 216–255 (RARATAIIHSVGISKLCSIMAVDNEEIALATANLFQCVND), and 753–792 (DKLRVKILKEKALPEIENYMFEDHEQIRQAATECMCNLVC).

Interacts with apobec2a, apobec2b, hsp90a.1, hsp90a.2, hsp90ab1 and myosin. In terms of tissue distribution, expressed in striated muscle tissue including somites, heart and craniofacial muscle. Detected in mesoderm adjacent to the dorsal midline during the late gastrula stages and in somitic mesoderm during development of trunk skeletal muscle. Also expressed in cranial skeletal muscle and in cardiac and smooth muscle. Detected in somitic muscle and heart primordium of 24 hour embryos. At later stages, expressed in muscles of pectoral fins, jaw, branchial arches and eye.

Its subcellular location is the cytoplasm. It is found in the myofibril. The protein resides in the sarcomere. It localises to the z line. The protein localises to the a band. Its subcellular location is the perinuclear region. In terms of biological role, acts as a co-chaperone for HSP90 and is required for proper folding of the myosin motor domain. Plays a role in sarcomere formation during muscle cell development. Required for myoseptal integrity, myofiber attachment, motility and craniofacial development. Is necessary for normal early lens development. The chain is Protein unc-45 homolog B from Danio rerio (Zebrafish).